The following is a 161-amino-acid chain: MSSFTHFNDQGRAKMVDISDKKATVRTAIACSSIVVTKEIYDKISHNEIGKGDVLAVAQIAGIMAAKRTSDIIPMCHPLLLKGVDVSFDWKQSEEQYRLLIEVKVKTEGSTGVEMEALTAASATALTVYDMCKAVDKGMIIGETYLLEKTGGKSGDYTRNS.

Substrate is bound by residues methionine 75 to histidine 77 and methionine 115 to glutamate 116. Aspartate 130 is an active-site residue.

It belongs to the MoaC family. As to quaternary structure, homohexamer; trimer of dimers.

It carries out the reaction (8S)-3',8-cyclo-7,8-dihydroguanosine 5'-triphosphate = cyclic pyranopterin phosphate + diphosphate. It participates in cofactor biosynthesis; molybdopterin biosynthesis. In terms of biological role, catalyzes the conversion of (8S)-3',8-cyclo-7,8-dihydroguanosine 5'-triphosphate to cyclic pyranopterin monophosphate (cPMP). This Bacillus cereus (strain G9842) protein is Cyclic pyranopterin monophosphate synthase.